The primary structure comprises 155 residues: Small ribosomal subunit protein uS17 (155 aa).

This sequence belongs to the universal ribosomal protein uS17 family. In terms of assembly, component of the small ribosomal subunit. Mature ribosomes consist of a small (40S) and a large (60S) subunit. The 40S subunit contains about 32 different proteins and 1 molecule of RNA (18S). The 60S subunit contains 45 different proteins and 3 molecules of RNA (25S, 5.8S and 5S).

It is found in the cytoplasm. Component of the ribosome, a large ribonucleoprotein complex responsible for the synthesis of proteins in the cell. The small ribosomal subunit (SSU) binds messenger RNAs (mRNAs) and translates the encoded message by selecting cognate aminoacyl-transfer RNA (tRNA) molecules. The large subunit (LSU) contains the ribosomal catalytic site termed the peptidyl transferase center (PTC), which catalyzes the formation of peptide bonds, thereby polymerizing the amino acids delivered by tRNAs into a polypeptide chain. The nascent polypeptides leave the ribosome through a tunnel in the LSU and interact with protein factors that function in enzymatic processing, targeting, and the membrane insertion of nascent chains at the exit of the ribosomal tunnel. The protein is Small ribosomal subunit protein uS17 of Candida albicans (strain SC5314 / ATCC MYA-2876) (Yeast).